The chain runs to 354 residues: 4-hydroxy-3-methylbut-2-en-1-yl diphosphate synthase (flavodoxin) (354 aa).

[4Fe-4S] cluster-binding residues include C263, C266, C298, and E305.

This sequence belongs to the IspG family. [4Fe-4S] cluster serves as cofactor.

It carries out the reaction (2E)-4-hydroxy-3-methylbut-2-enyl diphosphate + oxidized [flavodoxin] + H2O + 2 H(+) = 2-C-methyl-D-erythritol 2,4-cyclic diphosphate + reduced [flavodoxin]. The protein operates within isoprenoid biosynthesis; isopentenyl diphosphate biosynthesis via DXP pathway; isopentenyl diphosphate from 1-deoxy-D-xylulose 5-phosphate: step 5/6. In terms of biological role, converts 2C-methyl-D-erythritol 2,4-cyclodiphosphate (ME-2,4cPP) into 1-hydroxy-2-methyl-2-(E)-butenyl 4-diphosphate. In Fusobacterium nucleatum subsp. nucleatum (strain ATCC 25586 / DSM 15643 / BCRC 10681 / CIP 101130 / JCM 8532 / KCTC 2640 / LMG 13131 / VPI 4355), this protein is 4-hydroxy-3-methylbut-2-en-1-yl diphosphate synthase (flavodoxin).